The following is a 467-amino-acid chain: Retinoic acid receptor RXR-alpha (467 aa).

Positions 1–112 are disordered; sequence MDTKHFLPLD…MNPVSSTEDI (112 aa). A modulating domain region spans residues 1-139; the sequence is MDTKHFLPLD…GNMASFTKHI (139 aa). Residue K4 forms a Glycyl lysine isopeptide (Lys-Gly) (interchain with G-Cter in SUMO2) linkage. Polar residues predominate over residues 11–25; that stretch reads FSTQVNSSSLNSPTG. Residues S22 and S28 each carry the phosphoserine modification. The span at 32-52 shows a compositional bias: low complexity; the sequence is PSLHPSLGPGIGSPLGSPGQL. A compositionally biased stretch (polar residues) spans 54–63; that stretch reads SPISTLSSPI. 2 positions are modified to phosphoserine; by MAPK8 and MAPK9: S61 and S75. Residues 83 to 109 are compositionally biased toward polar residues; sequence SVPTTPTLGFGTGSPQLNSPMNPVSST. T87 carries the post-translational modification Phosphothreonine; by MAPK8 and MAPK9. Residue K113 forms a Glycyl lysine isopeptide (Lys-Gly) (interchain with G-Cter in SUMO) linkage. Residue S134 is modified to Phosphoserine. Zn(2+) contacts are provided by C140 and C143. An NR C4-type zinc finger spans residues 140 to 160; it reads CAICGDRSSGKHYGVYSCEGC. The segment at residues 140–205 is a DNA-binding region (nuclear receptor); sequence CAICGDRSSG…RYQKCLAMGM (66 aa). N6-acetyllysine is present on K150. The Zn(2+) site is built by C157 and C160. The segment at 165-170 is nuclear localization signal; that stretch reads KRTVRK. Zn(2+) is bound by residues C176, C182, C192, and C195. Residues 176–200 form an NR C4-type zinc finger; that stretch reads CRDNKDCLIDKRQRNRCQYCRYQKC. Residues 206-229 are hinge; sequence KREAVQEERQRGKDRNENEVESTS. Residues 211-223 show a composition bias toward basic and acidic residues; sequence QEERQRGKDRNEN. The segment at 211 to 233 is disordered; that stretch reads QEERQRGKDRNENEVESTSSANE. The region spanning 232–463 is the NR LBD domain; that stretch reads NEDMPVEKIL…TFLMEMLEAP (232 aa). S264 carries the phosphoserine modification. S265 is modified (phosphoserine; by MAPK8 and MAPK9). 2 residues coordinate 9-cis-retinoate: R321 and A332. 2 residues coordinate all-trans-retinoate: R321 and A332. Positions 353 to 373 are required for nuclear export; that stretch reads RVLTELVSKMRDMQMDKTELG.

The protein belongs to the nuclear hormone receptor family. NR2 subfamily. As to quaternary structure, homodimer. Heterodimer with RARA; required for ligand-dependent retinoic acid receptor transcriptional activity. Heterodimer with PPARA (via the leucine-like zipper in the LBD); the interaction is required for PPARA transcriptional activity. Heterodimerizes with PPARG. Heterodimerizes (via NR LBD) with RARB. Heterodimerizes with NR1H4; the heterodimerization enhances the binding affinity for LXXLL motifs from coactivators. Interacts with coactivator NCO6. Interacts with coactivator NCO3. Interacts with coactivator FAM120B. Interacts with coactivator PELP1, SENP6, SFPQ, DNTTIP2 and RNF8. Interacts with PRMT2. Interacts with ASXL1. Interacts with BHLHE40/DEC1, BHLHE41/DEC2, NCOR1 and NCOR2. Interacts in a ligand-dependent fashion with MED1 and NCOA1. Interacts with VDR. Interacts with EP300; the interaction is decreased by 9-cis retinoic acid. Heterodimer (via C-terminus) with NR4A1 (via DNA-binding domain); the interaction is enhanced by 9-cis retinoic acid. NR4A1 competes with EP300 for interaction with RXRA and thereby attenuates EP300 mediated acetylation of RXRA. In the absence of hormonal ligand, interacts with TACC1. Interacts ith IGFBP3. In terms of processing, acetylated by EP300; acetylation enhances DNA binding and transcriptional activity. Phosphorylated on serine and threonine residues mainly in the N-terminal modulating domain. Constitutively phosphorylated on Ser-22 in the presence or absence of ligand. Under stress conditions, hyperphosphorylated by activated JNK on Ser-61, Ser-75, Thr-87 and Ser-265. Phosphorylated on Ser-28, in vitro, by PKA. This phosphorylation is required for repression of cAMP-mediated transcriptional activity of RARA. Post-translationally, ubiquitinated by UBR5, leading to its degradation: UBR5 specifically recognizes and binds ligand-bound RXRA when it is not associated with coactivators (NCOAs). In presence of NCOAs, the UBR5-degron is not accessible, preventing its ubiquitination and degradation. In terms of processing, sumoylation negatively regulates transcriptional activity. Desumoylated specifically by SENP6. As to expression, expressed in macrophages (at protein level).

It is found in the nucleus. It localises to the cytoplasm. Its subcellular location is the mitochondrion. Its function is as follows. Receptor for retinoic acid that acts as a transcription factor. Forms homo- or heterodimers with retinoic acid receptors (RARs) and binds to target response elements in response to their ligands, all-trans or 9-cis retinoic acid, to regulate gene expression in various biological processes. The RAR/RXR heterodimers bind to the retinoic acid response elements (RARE) composed of tandem 5'-AGGTCA-3' sites known as DR1-DR5 to regulate transcription. The high affinity ligand for retinoid X receptors (RXRs) is 9-cis retinoic acid. In the absence of ligand, the RXR-RAR heterodimers associate with a multiprotein complex containing transcription corepressors that induce histone deacetylation, chromatin condensation and transcriptional suppression. On ligand binding, the corepressors dissociate from the receptors and coactivators are recruited leading to transcriptional activation. Serves as a common heterodimeric partner for a number of nuclear receptors, such as RARA, RARB and PPARA. The RXRA/RARB heterodimer can act as a transcriptional repressor or transcriptional activator, depending on the RARE DNA element context. The RXRA/PPARA heterodimer is required for PPARA transcriptional activity on fatty acid oxidation genes such as ACOX1 and the P450 system genes. Together with RARA, positively regulates microRNA-10a expression, thereby inhibiting the GATA6/VCAM1 signaling response to pulsatile shear stress in vascular endothelial cells. Acts as an enhancer of RARA binding to RARE DNA element. May facilitate the nuclear import of heterodimerization partners such as VDR and NR4A1. Promotes myelin debris phagocytosis and remyelination by macrophages. Plays a role in the attenuation of the innate immune system in response to viral infections, possibly by negatively regulating the transcription of antiviral genes such as type I IFN genes. Involved in the regulation of calcium signaling by repressing ITPR2 gene expression, thereby controlling cellular senescence. In Mus musculus (Mouse), this protein is Retinoic acid receptor RXR-alpha (Rxra).